Here is a 68-residue protein sequence, read N- to C-terminus: Suppressor of RNA silencing (68 aa).

The chain crosses the membrane as a helical span at residues 23-43 (LLTMSGAYVNVCVCIVFFILV).

This sequence belongs to the virgaviridae suppressor of RNA silencing family.

The protein localises to the host endoplasmic reticulum membrane. Functionally, suppressor of RNA-mediated gene silencing, also known as post-transcriptional gene silencing (PTGS), a mechanism of plant viral defense that performs sequence-specific inhibition of viral mRNAs expression. The RNA silencing suppression activity is variable depending on the origin of the isolate. This Solanum nigrum (Black nightshade) protein is Suppressor of RNA silencing (8K protein).